The primary structure comprises 285 residues: 4-diphosphocytidyl-2-C-methyl-D-erythritol kinase (285 aa).

The active site involves lysine 12. 94-104 contributes to the ATP binding site; that stretch reads PAQAGMGGGSS. Aspartate 136 is a catalytic residue.

Belongs to the GHMP kinase family. IspE subfamily.

It catalyses the reaction 4-CDP-2-C-methyl-D-erythritol + ATP = 4-CDP-2-C-methyl-D-erythritol 2-phosphate + ADP + H(+). It participates in isoprenoid biosynthesis; isopentenyl diphosphate biosynthesis via DXP pathway; isopentenyl diphosphate from 1-deoxy-D-xylulose 5-phosphate: step 3/6. In terms of biological role, catalyzes the phosphorylation of the position 2 hydroxy group of 4-diphosphocytidyl-2C-methyl-D-erythritol. The polypeptide is 4-diphosphocytidyl-2-C-methyl-D-erythritol kinase (Paracidovorax citrulli (strain AAC00-1) (Acidovorax citrulli)).